The following is a 1849-amino-acid chain: Protein virilizer (1849 aa).

Basic and acidic residues-rich tracts occupy residues 206 to 219 (QHYHQHVDEEQREM), 242 to 265 (THSESNEREYIRCSRDKGSRDWSR), 281 to 291 (RSRSDADEHKW), 332 to 347 (HSSESLHRDRDDEERS), and 785 to 818 (VEAKPEGKEDKPMDDSVEQKPDEGKAAGIRAAEE). 6 disordered regions span residues 206 to 364 (QHYH…DEII), 783 to 818 (RVVEAKPEGKEDKPMDDSVEQKPDEGKAAGIRAAEE), 1557 to 1584 (SASMETPAVETENDGANPAASCSTSSSG), 1666 to 1686 (GESKRTLNLSGSPQSNREMTP), 1715 to 1782 (RGRG…NRGS), and 1798 to 1849 (IGSP…PYLR). Residues 1671 to 1684 (TLNLSGSPQSNREM) show a composition bias toward polar residues. A compositionally biased stretch (low complexity) spans 1732–1742 (SRPPNTSRPPS). Positions 1800–1818 (SPSSWTESGGGSYRSTSES) are enriched in polar residues.

The protein belongs to the vir family. As to quaternary structure, component of the WMM complex, a N6-methyltransferase complex composed of a catalytic subcomplex, named MAC, and of an associated subcomplex, named MACOM. The MAC subcomplex is composed of Ime4/Mettl3 and Mettl14. The MACOM subcomplex is composed of fl(2)d, Flacc/Xio, Hakai, vir, and, in some cases of nito. Part of a complex containing fl(2)d, Sxl and vir.

The protein localises to the nucleus. Its function is as follows. Associated component of the WMM complex, a complex that mediates N6-methyladenosine (m6A) methylation of mRNAs, a modification that plays a role in the efficiency of mRNA splicing and is required for sex determination. Required for sex determination and dosage compensation via Sxl alternative splicing: m6A methylation acts as a key regulator of Sxl pre-mRNA and promotes female-specific alternative splicing of Sxl, which determines female physiognomy. M6A methylation is also required for neuronal functions. Required for proper inclusion of regulated exons in Ubx transcripts, leading to isoforms Ia/b and IIa/b. This Drosophila pseudoobscura pseudoobscura (Fruit fly) protein is Protein virilizer (vir).